A 337-amino-acid chain; its full sequence is Dihydroorotate dehydrogenase (quinone) (337 aa).

FMN contacts are provided by residues 62 to 66 (AGLDK) and Thr86. Residue Lys66 coordinates substrate. 111–115 (NRMGF) contacts substrate. Positions 140 and 173 each coordinate FMN. A substrate-binding site is contributed by Asn173. Ser176 functions as the Nucleophile in the catalytic mechanism. Asn178 is a substrate binding site. Positions 218 and 246 each coordinate FMN. Position 247–248 (247–248 (NT)) interacts with substrate. Residues Gly269, Gly298, and 319 to 320 (YS) contribute to the FMN site.

Belongs to the dihydroorotate dehydrogenase family. Type 2 subfamily. In terms of assembly, monomer. Requires FMN as cofactor.

The protein localises to the cell membrane. It catalyses the reaction (S)-dihydroorotate + a quinone = orotate + a quinol. It participates in pyrimidine metabolism; UMP biosynthesis via de novo pathway; orotate from (S)-dihydroorotate (quinone route): step 1/1. Its function is as follows. Catalyzes the conversion of dihydroorotate to orotate with quinone as electron acceptor. The polypeptide is Dihydroorotate dehydrogenase (quinone) (Wigglesworthia glossinidia brevipalpis).